Here is a 564-residue protein sequence, read N- to C-terminus: MSSYGRLDEHEQAKLEASRKTKKRIAIIAISSIVLVCIVVGAVVGTTARDNSKKPPTENNGEPISVSVKALCDVTLHKEKCFETLGSAPNASRSSPEELFKYAVKVTITELSKVLDGFSNGEHMDNATSAAMGACVELIGLAVDQLNETMTSSLKNFDDLRTWLSSVGTYQETCMDALVEANKPSLTTFGENHLKNSTEMTSNALAIITWLGKIADTVKFRRRRLLETGNAKVVVADLPMMEGRRLLESGDLKKKATIVVAKDGSGKYRTIGEALAEVEEKNEKPTIIYVKKGVYLENVRVEKTKWNVVMVGDGQSKTIVSAGLNFIDGTPTFETATFAVFGKGFMARDMGFINTAGPAKHQAVALMVSADLSVFYKCTMDAFQDTMYAHAQRQFYRDCVILGTVDFIFGNAAVVFQKCEILPRRPMKGQQNTITAQGRKDPNQNTGISIHNCTIKPLDNLTDIQTFLGRPWKDFSTTVIMKSFMDKFINPKGWLPWTGDTAPDTIFYAEYLNSGPGASTKNRVKWQGLKTSLTKKEANKFTVKPFIDGNNWLPATKVPFNSDF.

Residues 25 to 45 (IAIIAISSIVLVCIVVGAVVG) traverse the membrane as a helical segment. A pectinesterase inhibitor 46 region spans residues 62–207 (EPISVSVKAL…TEMTSNALAI (146 aa)). N-linked (GlcNAc...) asparagine glycosylation is found at asparagine 90, asparagine 126, asparagine 147, and asparagine 196. The segment at 257–550 (TIVVAKDGSG…FTVKPFIDGN (294 aa)) is pectinesterase 46. Residues threonine 332 and glutamine 362 each contribute to the substrate site. Residue aspartate 385 is the Proton donor; for pectinesterase activity of the active site. Residues cysteine 399 and cysteine 419 are joined by a disulfide bond. The active-site Nucleophile; for pectinesterase activity is the aspartate 406. Asparagine 452 and asparagine 460 each carry an N-linked (GlcNAc...) asparagine glycan. Arginine 470 and tryptophan 472 together coordinate substrate.

This sequence in the N-terminal section; belongs to the PMEI family. It in the C-terminal section; belongs to the pectinesterase family.

It localises to the membrane. The enzyme catalyses [(1-&gt;4)-alpha-D-galacturonosyl methyl ester](n) + n H2O = [(1-&gt;4)-alpha-D-galacturonosyl](n) + n methanol + n H(+). It functions in the pathway glycan metabolism; pectin degradation; 2-dehydro-3-deoxy-D-gluconate from pectin: step 1/5. Functionally, acts in the modification of cell walls via demethylesterification of cell wall pectin. This is Probable pectinesterase/pectinesterase inhibitor 46 (PME46) from Arabidopsis thaliana (Mouse-ear cress).